Consider the following 464-residue polypeptide: Glutamate--tRNA ligase 1 (464 aa).

The 'HIGH' region motif lies at 8-18 (PSPTGHLHVGG). A 'KMSKS' region motif is present at residues 231–235 (PLSKR). Lysine 234 is an ATP binding site.

It belongs to the class-I aminoacyl-tRNA synthetase family. Glutamate--tRNA ligase type 1 subfamily. As to quaternary structure, monomer.

It is found in the cytoplasm. The catalysed reaction is tRNA(Glu) + L-glutamate + ATP = L-glutamyl-tRNA(Glu) + AMP + diphosphate. In terms of biological role, catalyzes the attachment of glutamate to tRNA(Glu) in a two-step reaction: glutamate is first activated by ATP to form Glu-AMP and then transferred to the acceptor end of tRNA(Glu). This Thermotoga sp. (strain RQ2) protein is Glutamate--tRNA ligase 1.